We begin with the raw amino-acid sequence, 141 residues long: Head virion protein G6P (141 aa).

Transmembrane regions (helical) follow at residues W3–A23, G33–I53, and L80–I100.

It belongs to the inovirus G6P protein family. As to quaternary structure, interacts with G3P; this interaction is required for proper integration of G3P and G6P into the virion.

The protein resides in the virion. It is found in the host membrane. Plays essential roles both in the entry of the viral genome into the bacterial host and in budding process. The formation of the G3P-G6P complex termed adsorption complex is essential for correct termination of filamentous phage assembly. This chain is Head virion protein G6P (VI), found in Pseudomonas phage Pf1 (Bacteriophage Pf1).